The chain runs to 345 residues: Dimethyladenosine transferase 1, mitochondrial (345 aa).

The N-terminal 27 residues, 1–27, are a transit peptide targeting the mitochondrion; the sequence is MAASGKLGTFRLPPLPTIREIIKLFGL. Residues 35-38, N36, L38, G63, E85, D111, and N141 contribute to the S-adenosyl-L-methionine site; that span reads QNFL.

It belongs to the class I-like SAM-binding methyltransferase superfamily. rRNA adenine N(6)-methyltransferase family. KsgA subfamily. In terms of assembly, interacts with mitochondrial RNA polymerase POLRMT. Interacts with TFAM.

It localises to the mitochondrion. Functionally, S-adenosyl-L-methionine-dependent methyltransferase which specifically dimethylates mitochondrial 12S rRNA at the conserved stem loop. Also required for basal transcription of mitochondrial DNA, probably via its interaction with POLRMT and TFAM. Stimulates transcription independently of the methyltransferase activity. This Rattus norvegicus (Rat) protein is Dimethyladenosine transferase 1, mitochondrial (Tfb1m).